The sequence spans 148 residues: Large ribosomal subunit protein bL9 (148 aa).

The protein belongs to the bacterial ribosomal protein bL9 family.

Binds to the 23S rRNA. This chain is Large ribosomal subunit protein bL9, found in Macrococcus caseolyticus (strain JCSC5402) (Macrococcoides caseolyticum).